Reading from the N-terminus, the 247-residue chain is Large ribosomal subunit protein uL30 (247 aa).

N-acetylmethionine is present on Met-1. A run of 4 repeats spans residues 7-17 (KKKVPAVPETL), 18-29 (KKKRRNFAELKI), 30-41 (KRLRKKFAQKML), and 42-53 (RKARRKLIYEKA). The interval 7 to 53 (KKKVPAVPETLKKKRRNFAELKIKRLRKKFAQKMLRKARRKLIYEKA) is 4 X 12 AA tandem repeats. A Phosphothreonine modification is found at Thr-16. Lys-123 bears the N6-acetyllysine mark. N6-succinyllysine is present on Lys-126. Residue Tyr-138 is modified to Phosphotyrosine.

It belongs to the universal ribosomal protein uL30 family. Component of the large ribosomal subunit. Homodimer. Interacts with DHX33.

The protein resides in the cytoplasm. In terms of biological role, component of the large ribosomal subunit. The ribosome is a large ribonucleoprotein complex responsible for the synthesis of proteins in the cell. Binds to G-rich structures in 28S rRNA and in mRNAs. Plays a regulatory role in the translation apparatus; inhibits cell-free translation of mRNAs. In Macaca fascicularis (Crab-eating macaque), this protein is Large ribosomal subunit protein uL30 (RPL7).